We begin with the raw amino-acid sequence, 87 residues long: Small polypeptide ROTUNDIFOLIA LIKE 2 (87 aa).

Residues 19–35 (LIPHTSHYILQLVYLHL) traverse the membrane as a helical segment. A required for DVL/RTFL small polypeptide activity region spans residues 56 to 87 (GQMGRLNRAFREKRARFYIFRRCVIMLLRWSD).

The protein belongs to the DVL/RTFL small polypeptides family.

It is found in the cell membrane. Its function is as follows. Small polypeptide acting as a regulatory molecule which coordinates cellular responses required for differentiation, growth and development, probably by restricting polar cell proliferation in lateral organs. The chain is Small polypeptide ROTUNDIFOLIA LIKE 2 from Oryza sativa subsp. japonica (Rice).